Reading from the N-terminus, the 241-residue chain is Probable transcriptional regulatory protein RALTA_A0859 (241 aa).

It belongs to the TACO1 family.

Its subcellular location is the cytoplasm. The protein is Probable transcriptional regulatory protein RALTA_A0859 of Cupriavidus taiwanensis (strain DSM 17343 / BCRC 17206 / CCUG 44338 / CIP 107171 / LMG 19424 / R1) (Ralstonia taiwanensis (strain LMG 19424)).